The sequence spans 311 residues: MAVLLRDKHISYLHDIGNRTDELDFWLKEHLHVSAIYWSCMSFWLLKKKDQIDKERIVSFLLSCLTESGGFACYPGHDDHITNTVYAVQVLAMLDSLHVVDKDKVASYIIGLQNEDGSMKGDRWGEIDARFLYSGINCLAILGKLDYLNKNTAVDWLMKCYNFDGGFGLCPGAESHGAMVFTCVAALKILNKLDLIDEELLGWWISERQVKGGGLNGRPEKLPDSCYGWWDLSPLAIIGKLDWIDRNQLIDFLLGTQDADSGGFADRKEDATDVYHTCFSLAGLSLLQFPNIEPVDPRFCLPLEVTQKMKL.

5 PFTB repeats span residues 54 to 95 (KERI…AMLD), 102 to 143 (KDKV…AILG), 150 to 191 (KNTA…KILN), 197 to 239 (DEEL…AIIG), and 246 to 288 (RNQL…SLLQ). Residues 176–178 (HGA) and 218–230 (RPEKLPDSCYGWW) contribute to the geranylgeranyl diphosphate site. Residues Asp-224, Cys-226, and His-276 each contribute to the Zn(2+) site.

The protein belongs to the protein prenyltransferase subunit beta family. As to quaternary structure, heterodimer of an alpha and a beta subunit. Requires Zn(2+) as cofactor.

The catalysed reaction is geranylgeranyl diphosphate + L-cysteinyl-[protein] = S-geranylgeranyl-L-cysteinyl-[protein] + diphosphate. Its function is as follows. Catalyzes the transfer of a geranyl-geranyl moiety from geranyl-geranyl pyrophosphate to proteins having the C-terminal -XCC or -XCXC, where both cysteines may become modified. The chain is Geranylgeranyl transferase type-2 subunit beta (ptb1) from Schizosaccharomyces pombe (strain 972 / ATCC 24843) (Fission yeast).